We begin with the raw amino-acid sequence, 205 residues long: Transcription termination/antitermination protein NusG (205 aa).

The KOW domain maps to 154-178 (GDHIMVLSGPFKDFEGDVIEVSPER).

The protein belongs to the NusG family.

Participates in transcription elongation, termination and antitermination. This Synechocystis sp. (strain ATCC 27184 / PCC 6803 / Kazusa) protein is Transcription termination/antitermination protein NusG.